Here is a 318-residue protein sequence, read N- to C-terminus: GTP 3',8-cyclase (318 aa).

The Radical SAM core domain occupies 4–218 (KHGRNIDYLR…MSRSDLIPIE (215 aa)). R13 provides a ligand contact to GTP. [4Fe-4S] cluster is bound by residues C20 and C24. Residue Y26 participates in S-adenosyl-L-methionine binding. A [4Fe-4S] cluster-binding site is contributed by C27. R62 is a binding site for GTP. G66 serves as a coordination point for S-adenosyl-L-methionine. T93 is a binding site for GTP. S117 contacts S-adenosyl-L-methionine. K154 serves as a coordination point for GTP. M188 serves as a coordination point for S-adenosyl-L-methionine. [4Fe-4S] cluster-binding residues include C248 and C251. 253–255 (KIR) lines the GTP pocket. C265 contacts [4Fe-4S] cluster.

The protein belongs to the radical SAM superfamily. MoaA family. As to quaternary structure, monomer and homodimer. The cofactor is [4Fe-4S] cluster.

The enzyme catalyses GTP + AH2 + S-adenosyl-L-methionine = (8S)-3',8-cyclo-7,8-dihydroguanosine 5'-triphosphate + 5'-deoxyadenosine + L-methionine + A + H(+). It functions in the pathway cofactor biosynthesis; molybdopterin biosynthesis. Its function is as follows. Catalyzes the cyclization of GTP to (8S)-3',8-cyclo-7,8-dihydroguanosine 5'-triphosphate. This is GTP 3',8-cyclase from Clostridium acetobutylicum (strain ATCC 824 / DSM 792 / JCM 1419 / IAM 19013 / LMG 5710 / NBRC 13948 / NRRL B-527 / VKM B-1787 / 2291 / W).